Here is a 1037-residue protein sequence, read N- to C-terminus: Caspase recruitment domain-containing protein 6 (1037 aa).

The residue at position 2 (A2) is an N-acetylalanine. Positions 3 to 94 (TESTPSEIIE…QSAAICGLRH (92 aa)) constitute a CARD domain. Position 154 is a phosphoserine (S154). Disordered stretches follow at residues 235–270 (DPEH…TSLS), 669–704 (VSSG…PIQE), and 887–1037 (RTSH…GGKH). Over residues 242-261 (DGEEDFENSETTEFSGEEPS) the composition is skewed to acidic residues. The span at 690-699 (LKSSSKSQAL) shows a compositional bias: low complexity. Polar residues-rich tracts occupy residues 911-928 (ASQQ…SNPA), 938-954 (KSSQ…TVKH), and 963-984 (VPSQ…QTKP). Residue S985 is modified to Phosphoserine. Residues 994 to 1012 (PSQPWPPQSKPSQPRPPQP) are compositionally biased toward pro residues. Residues 1023-1037 (KAHHSKAGQKRGGKH) are compositionally biased toward basic residues.

May be involved in apoptosis. This is Caspase recruitment domain-containing protein 6 (CARD6) from Homo sapiens (Human).